The sequence spans 341 residues: Serine/threonine-protein kinase pdik1l (341 aa).

Residues 8–332 form the Protein kinase domain; the sequence is YELIQEVGRG…FELELRLVRI (325 aa). 14–22 lines the ATP pocket; sequence VGRGSYGVV. Catalysis depends on Asp164, which acts as the Proton acceptor.

The protein belongs to the protein kinase superfamily. Ser/Thr protein kinase family.

The protein localises to the nucleus. The catalysed reaction is L-seryl-[protein] + ATP = O-phospho-L-seryl-[protein] + ADP + H(+). It carries out the reaction L-threonyl-[protein] + ATP = O-phospho-L-threonyl-[protein] + ADP + H(+). This Danio rerio (Zebrafish) protein is Serine/threonine-protein kinase pdik1l (pdik1l).